A 237-amino-acid chain; its full sequence is Pyridoxine 5'-phosphate synthase (237 aa).

Residues Asn7 and Arg18 each contribute to the 3-amino-2-oxopropyl phosphate site. The active-site Proton acceptor is His43. 1-deoxy-D-xylulose 5-phosphate is bound by residues Arg45 and His50. The active-site Proton acceptor is Glu70. Residue Thr100 coordinates 1-deoxy-D-xylulose 5-phosphate. His190 (proton donor) is an active-site residue. 3-amino-2-oxopropyl phosphate is bound by residues Asp191 and 213 to 214; that span reads GH.

It belongs to the PNP synthase family. Homooctamer; tetramer of dimers.

It localises to the cytoplasm. It carries out the reaction 3-amino-2-oxopropyl phosphate + 1-deoxy-D-xylulose 5-phosphate = pyridoxine 5'-phosphate + phosphate + 2 H2O + H(+). It participates in cofactor biosynthesis; pyridoxine 5'-phosphate biosynthesis; pyridoxine 5'-phosphate from D-erythrose 4-phosphate: step 5/5. Catalyzes the complicated ring closure reaction between the two acyclic compounds 1-deoxy-D-xylulose-5-phosphate (DXP) and 3-amino-2-oxopropyl phosphate (1-amino-acetone-3-phosphate or AAP) to form pyridoxine 5'-phosphate (PNP) and inorganic phosphate. The chain is Pyridoxine 5'-phosphate synthase from Bacteroides fragilis (strain ATCC 25285 / DSM 2151 / CCUG 4856 / JCM 11019 / LMG 10263 / NCTC 9343 / Onslow / VPI 2553 / EN-2).